The chain runs to 61 residues: Large ribosomal subunit protein uL30 (61 aa).

It belongs to the universal ribosomal protein uL30 family. As to quaternary structure, part of the 50S ribosomal subunit.

In Mycolicibacterium gilvum (strain PYR-GCK) (Mycobacterium gilvum (strain PYR-GCK)), this protein is Large ribosomal subunit protein uL30.